Here is a 144-residue protein sequence, read N- to C-terminus: Neuritin-B (144 aa).

The signal sequence occupies residues 1-27 (MGLKLSGRYIFLVLAVHLAYLLQAVKA). Ser114 is lipidated: GPI-anchor amidated serine. A propeptide spans 115–144 (TGAPGPRLLFPAFLPLLIVFLSALLNWVLQ) (removed in mature form).

This sequence belongs to the neuritin family.

The protein resides in the cell membrane. Functionally, modulates postsynaptic dendritic arbor elaboration and synaptic maturation. The polypeptide is Neuritin-B (nrn1-b) (Xenopus laevis (African clawed frog)).